The following is a 313-amino-acid chain: Glycine--tRNA ligase alpha subunit (313 aa).

The protein belongs to the class-II aminoacyl-tRNA synthetase family. As to quaternary structure, tetramer of two alpha and two beta subunits.

It localises to the cytoplasm. The catalysed reaction is tRNA(Gly) + glycine + ATP = glycyl-tRNA(Gly) + AMP + diphosphate. This Leuconostoc mesenteroides subsp. mesenteroides (strain ATCC 8293 / DSM 20343 / BCRC 11652 / CCM 1803 / JCM 6124 / NCDO 523 / NBRC 100496 / NCIMB 8023 / NCTC 12954 / NRRL B-1118 / 37Y) protein is Glycine--tRNA ligase alpha subunit.